Consider the following 79-residue polypeptide: Acyl carrier protein 1 (79 aa).

Residues 2–77 (DNIEQRVKKI…QAIDYARANV (76 aa)) form the Carrier domain. S37 is modified (O-(pantetheine 4'-phosphoryl)serine).

Belongs to the acyl carrier protein (ACP) family. Post-translationally, 4'-phosphopantetheine is transferred from CoA to a specific serine of apo-ACP by AcpS. This modification is essential for activity because fatty acids are bound in thioester linkage to the sulfhydryl of the prosthetic group.

Its subcellular location is the cytoplasm. It participates in lipid metabolism; fatty acid biosynthesis. Carrier of the growing fatty acid chain in fatty acid biosynthesis. This Ralstonia nicotianae (strain ATCC BAA-1114 / GMI1000) (Ralstonia solanacearum) protein is Acyl carrier protein 1.